The primary structure comprises 1083 residues: Carbamoyl phosphate synthase large chain (1083 aa).

Residues 1–402 (MPKRTDIRKV…AYMKALRSME (402 aa)) form a carboxyphosphate synthetic domain region. ATP contacts are provided by Arg129, Arg169, Gly175, Gly176, Glu208, Val210, Glu215, Gly241, Val242, His243, Gln285, and Glu299. The ATP-grasp 1 domain maps to 133 to 328 (KAAMQKIGVA…IAKIAAKLAL (196 aa)). Positions 285, 299, and 301 each coordinate Mg(2+). Gln285, Glu299, and Asn301 together coordinate Mn(2+). The interval 403–554 (LGRVGLESPE…YSTYEEEDEA (152 aa)) is oligomerization domain. A carbamoyl phosphate synthetic domain region spans residues 555-937 (PPTDRQKVLI…AFAKSQLAAG (383 aa)). An ATP-grasp 2 domain is found at 679–871 (AALIEKLGLK…MAKIAALCMV (193 aa)). ATP-binding residues include Arg715, Arg754, Leu756, Glu761, Gly787, Val788, His789, Ser790, Gln830, and Glu842. Mg(2+) is bound by residues Gln830, Glu842, and Asn844. Gln830, Glu842, and Asn844 together coordinate Mn(2+). Residues 938–1078 (VKLPKSGKVF…QEYLGINAAP (141 aa)) enclose the MGS-like domain. An allosteric domain region spans residues 938 to 1083 (VKLPKSGKVF…INAAPPGTRR (146 aa)).

Belongs to the CarB family. In terms of assembly, composed of two chains; the small (or glutamine) chain promotes the hydrolysis of glutamine to ammonia, which is used by the large (or ammonia) chain to synthesize carbamoyl phosphate. Tetramer of heterodimers (alpha,beta)4. It depends on Mg(2+) as a cofactor. Requires Mn(2+) as cofactor.

It catalyses the reaction hydrogencarbonate + L-glutamine + 2 ATP + H2O = carbamoyl phosphate + L-glutamate + 2 ADP + phosphate + 2 H(+). The enzyme catalyses hydrogencarbonate + NH4(+) + 2 ATP = carbamoyl phosphate + 2 ADP + phosphate + 2 H(+). Its pathway is amino-acid biosynthesis; L-arginine biosynthesis; carbamoyl phosphate from bicarbonate: step 1/1. It functions in the pathway pyrimidine metabolism; UMP biosynthesis via de novo pathway; (S)-dihydroorotate from bicarbonate: step 1/3. Large subunit of the glutamine-dependent carbamoyl phosphate synthetase (CPSase). CPSase catalyzes the formation of carbamoyl phosphate from the ammonia moiety of glutamine, carbonate, and phosphate donated by ATP, constituting the first step of 2 biosynthetic pathways, one leading to arginine and/or urea and the other to pyrimidine nucleotides. The large subunit (synthetase) binds the substrates ammonia (free or transferred from glutamine from the small subunit), hydrogencarbonate and ATP and carries out an ATP-coupled ligase reaction, activating hydrogencarbonate by forming carboxy phosphate which reacts with ammonia to form carbamoyl phosphate. The polypeptide is Carbamoyl phosphate synthase large chain (Myxococcus xanthus (strain DK1622)).